A 926-amino-acid polypeptide reads, in one-letter code: Translation initiation factor IF-2 (926 aa).

Disordered regions lie at residues 1 to 185 and 200 to 299; these read MTDS…EEVE and EDKA…RRRG. 2 stretches are compositionally biased toward low complexity: residues 13–24 and 70–96; these read TGKKTLTLKPTG and APAT…AAPQ. Over residues 110–133 the composition is skewed to polar residues; sequence TNQYSQQRHPGQQNRPQASSQPSR. Basic and acidic residues predominate over residues 151–185; that stretch reads MDARRRALAEAQVREVEDAKRRAEEEVRRQAEEVE. The span at 211 to 251 shows a compositional bias: low complexity; the sequence is APEPVAEPVAPVAETPRAADPAPRAPSPAGAKPAAGAPAPS. In terms of domain architecture, tr-type G spans 424-591; that stretch reads SRPPVVTIMG…AVLLQAEILD (168 aa). Residues 433–440 are G1; sequence GHVDHGKT. 433–440 contributes to the GTP binding site; the sequence is GHVDHGKT. The segment at 458–462 is G2; it reads GITQH. Residues 479–482 form a G3 region; that stretch reads DTPG. Residues 479–483 and 533–536 contribute to the GTP site; these read DTPGH and NKID. Positions 533 to 536 are G4; sequence NKID. Residues 569–571 are G5; the sequence is SAK.

The protein belongs to the TRAFAC class translation factor GTPase superfamily. Classic translation factor GTPase family. IF-2 subfamily.

The protein localises to the cytoplasm. Its function is as follows. One of the essential components for the initiation of protein synthesis. Protects formylmethionyl-tRNA from spontaneous hydrolysis and promotes its binding to the 30S ribosomal subunits. Also involved in the hydrolysis of GTP during the formation of the 70S ribosomal complex. The sequence is that of Translation initiation factor IF-2 from Allorhizobium ampelinum (strain ATCC BAA-846 / DSM 112012 / S4) (Agrobacterium vitis (strain S4)).